The following is a 628-amino-acid chain: Glutamyl-tRNA(Gln) amidotransferase subunit E (628 aa).

It belongs to the GatB/GatE family. GatE subfamily. In terms of assembly, heterodimer of GatD and GatE.

It catalyses the reaction L-glutamyl-tRNA(Gln) + L-glutamine + ATP + H2O = L-glutaminyl-tRNA(Gln) + L-glutamate + ADP + phosphate + H(+). Its function is as follows. Allows the formation of correctly charged Gln-tRNA(Gln) through the transamidation of misacylated Glu-tRNA(Gln) in organisms which lack glutaminyl-tRNA synthetase. The reaction takes place in the presence of glutamine and ATP through an activated gamma-phospho-Glu-tRNA(Gln). The GatDE system is specific for glutamate and does not act on aspartate. The polypeptide is Glutamyl-tRNA(Gln) amidotransferase subunit E (Pyrococcus furiosus (strain ATCC 43587 / DSM 3638 / JCM 8422 / Vc1)).